The primary structure comprises 2596 residues: Protein unc-79 homolog (2596 aa).

Phosphoserine is present on residues Ser754 and Ser758. Disordered stretches follow at residues 907–931 (GPEG…TVPS), 1539–1573 (SQRQ…GFQE), 1594–1632 (VDSP…DSDS), 1648–1679 (EEEE…SVLS), 1695–1832 (KDFS…FKIQ), and 1863–1909 (LGEQ…KQIQ). A compositionally biased stretch (basic and acidic residues) spans 1594–1606 (VDSPGKPAPREDL). Over residues 1662-1679 (GNNAASSPSIPSQPSVLS) the composition is skewed to low complexity. Over residues 1704-1713 (NHQSASNEDS) the composition is skewed to polar residues. A compositionally biased stretch (basic and acidic residues) spans 1726–1735 (ELSKSEELRE). The span at 1897-1908 (ETSSHSSISKQI) shows a compositional bias: polar residues. The next 2 helical transmembrane spans lie at 2184 to 2204 (LLSF…ELCG) and 2426 to 2446 (CVLH…WTVY).

This sequence belongs to the unc-79 family. As to quaternary structure, NALCN complex consists of NALCN and auxiliary subunits, UNC79, UNC80 and NACL1. These auxiliary subunits are essential for the NALCN channel function. UNC80 bridges NALCN to UNC79. Interacts with NALCN. Interacts with UNC80.

The protein localises to the cell membrane. In terms of biological role, auxiliary subunit of the NALCN sodium channel complex. The NALCN sodium channel complex is a voltage-gated ion channel responsible for the resting Na(+) permeability that controls neuronal excitability. Activated by neuropeptides substance P, neurotensin, and extracellular calcium that regulates neuronal excitability by controlling the sizes of NALCN-dependent sodium-leak current. In Mus musculus (Mouse), this protein is Protein unc-79 homolog (Unc79).